Consider the following 184-residue polypeptide: Elongation factor P 1 (184 aa).

The protein belongs to the elongation factor P family.

Its subcellular location is the cytoplasm. Its pathway is protein biosynthesis; polypeptide chain elongation. In terms of biological role, involved in peptide bond synthesis. Stimulates efficient translation and peptide-bond synthesis on native or reconstituted 70S ribosomes in vitro. Probably functions indirectly by altering the affinity of the ribosome for aminoacyl-tRNA, thus increasing their reactivity as acceptors for peptidyl transferase. In Protochlamydia amoebophila (strain UWE25), this protein is Elongation factor P 1 (efp1).